Consider the following 406-residue polypeptide: Acetylornithine/succinyldiaminopimelate aminotransferase (406 aa).

Pyridoxal 5'-phosphate is bound by residues 108–109 and F141; that span reads GT. R144 is a binding site for N(2)-acetyl-L-ornithine. 226–229 provides a ligand contact to pyridoxal 5'-phosphate; that stretch reads DEVQ. Position 255 is an N6-(pyridoxal phosphate)lysine (K255). Position 283 (S283) interacts with N(2)-acetyl-L-ornithine. Residue T284 participates in pyridoxal 5'-phosphate binding.

The protein belongs to the class-III pyridoxal-phosphate-dependent aminotransferase family. ArgD subfamily. Homodimer. Pyridoxal 5'-phosphate serves as cofactor.

The protein resides in the cytoplasm. The enzyme catalyses N(2)-acetyl-L-ornithine + 2-oxoglutarate = N-acetyl-L-glutamate 5-semialdehyde + L-glutamate. It catalyses the reaction N-succinyl-(2S,6S)-2,6-diaminopimelate + 2-oxoglutarate = (S)-2-succinylamino-6-oxoheptanedioate + L-glutamate. It functions in the pathway amino-acid biosynthesis; L-arginine biosynthesis; N(2)-acetyl-L-ornithine from L-glutamate: step 4/4. Its pathway is amino-acid biosynthesis; L-lysine biosynthesis via DAP pathway; LL-2,6-diaminopimelate from (S)-tetrahydrodipicolinate (succinylase route): step 2/3. Its function is as follows. Involved in both the arginine and lysine biosynthetic pathways. The sequence is that of Acetylornithine/succinyldiaminopimelate aminotransferase from Escherichia coli O6:H1 (strain CFT073 / ATCC 700928 / UPEC).